The chain runs to 720 residues: Glutaryl-7-aminocephalosporanic-acid acylase (720 aa).

Residues 1-29 (MLRVLHRAASALVMATVIGLAPGVAFALA) form the signal peptide. Positions 188–198 (EGDPPDLADQG) are cleaved as a propeptide — spacer peptide. The Nucleophile role is filled by serine 199. Residues histidine 221 and glutamate 653 contribute to the active site.

Belongs to the peptidase S45 family. In terms of assembly, heterodimer of a small subunit and a large subunit processed from the same precursor.

The protein resides in the periplasm. The enzyme catalyses (7R)-7-(4-carboxybutanamido)cephalosporanate + H2O = (7R)-7-aminocephalosporanate + glutarate. In terms of biological role, catalyzes the deacylation of 7 beta-(4-carboxybutanamido)cephalosporanic acid (glutaryl-7-aminocephalosporanic acid or GL-7-ACA) to 7-aminocephalosporanic acid (7-ACA). Cannot efficiently use cephalosporin C (CPC), penicillin G, or ampicillin as substrates. This chain is Glutaryl-7-aminocephalosporanic-acid acylase, found in Brevundimonas diminuta (Pseudomonas diminuta).